We begin with the raw amino-acid sequence, 162 residues long: Hydrogenase-2 operon protein HybE (162 aa).

This sequence belongs to the HupJ family.

In Escherichia coli O157:H7, this protein is Hydrogenase-2 operon protein HybE (hybE).